A 288-amino-acid chain; its full sequence is Galactose/N-acetyl-D-galactosamine lectin light subunit 1 (288 aa).

The signal sequence occupies residues 1-15 (MIILVLLISYSFGKT). Asn-205 and Asn-261 each carry an N-linked (GlcNAc...) asparagine glycan.

Heterodimer composed of a 170 kDa heavy subunit (hgl) and a 31/35 kDa light subunit (lgl); disulfide-linked.

Its subcellular location is the cell membrane. Light subunit of a heterodimeric lectin; the heavy subunit binds galactose and N-acetyl-D-galactosamine of host glycoproteins and thus mediates adhesion to host cells. This Entamoeba histolytica (strain ATCC 30459 / HM-1:IMSS / ABRM) protein is Galactose/N-acetyl-D-galactosamine lectin light subunit 1.